The primary structure comprises 1423 residues: Serum albumin SDS-1 (1423 aa).

An N-terminal signal peptide occupies residues 1 to 23; the sequence is MGKAMLKLCITLMVLVFSGTAES. The propeptide occupies 24-29; sequence KGVMRR. Albumin domains are found at residues 29-230, 231-426, 427-608, 609-811, 812-1031, 1032-1226, and 1227-1422; these read REDE…EDFK, HKLT…EFKS, EVEK…SDFK, MDVE…SQAR, QEAL…HTIH, MEIR…AIEK, and VIKD…AIKS. Residue H36 coordinates Cu cation. 16 disulfide bridges follow: C42–C88, C87–C96, C109–C125, C124–C135, C167–C212, C211–C221, C244–C290, C289–C298, C311–C327, C326–C337, C363–C408, C407–C416, C439–C485, C484–C493, C506–C522, and C521–C532. N490 is a glycosylation site (N-linked (GlcNAc...) asparagine). An N-linked (GlcNAc...) asparagine glycan is attached at N541. 11 cysteine pairs are disulfide-bonded: C556–C601, C622–C668, C667–C676, C689–C705, C704–C715, C747–C792, C791–C802, C825–C871, C870–C879, C892–C907, and C906–C947. N652 is a glycosylation site (N-linked (GlcNAc...) asparagine). The N-linked (GlcNAc...) asparagine glycan is linked to N754. Residues N908 and N911 are each glycosylated (N-linked (GlcNAc...) asparagine). The interval 910 to 936 is disordered; the sequence is SNTSTTTSTTTSTTTSTTTSTTTSTTS. 7 repeat units span residues 913 to 916, 917 to 920, 921 to 924, 925 to 928, 929 to 932, 933 to 935, and 936 to 939. The 7 X 4 AA tandem repeats of S-T-T-T stretch occupies residues 913–939; sequence STTTSTTTSTTTSTTTSTTTSTTSTTT. An N-linked (GlcNAc...) asparagine glycan is attached at N954. 8 cysteine pairs are disulfide-bonded: C969–C1014, C1013–C1022, C1045–C1091, C1090–C1099, C1112–C1128, C1127–C1138, C1163–C1208, and C1207–C1216. N-linked (GlcNAc...) asparagine glycosylation occurs at N1070. The N-linked (GlcNAc...) asparagine glycan is linked to N1236. 6 disulfides stabilise this stretch: C1239-C1285, C1284-C1291, C1304-C1320, C1319-C1330, C1359-C1404, and C1403-C1412.

This sequence belongs to the ALB/AFP/VDB family. As to expression, plasma.

It is found in the secreted. Serum albumin, the main protein of plasma, has a good binding capacity for water, Ca(2+), Na(+), K(+), fatty acids, hormones, bilirubin and drugs. Its main function is the regulation of the colloidal osmotic pressure of blood. In Petromyzon marinus (Sea lamprey), this protein is Serum albumin SDS-1 (SDS-1).